The following is a 1850-amino-acid chain: Chitin synthase V (1850 aa).

Residues 1–27 (MASTLPPLGGGNGGPHTQHSLPSLPAH) form a disordered region. Positions 1–779 (MASTLPPLGG…EIAGLVDGSA (779 aa)) constitute a Myosin motor domain. 105-112 (GESGSGKS) lines the ATP pocket. 5 N-linked (GlcNAc...) asparagine glycosylation sites follow: Asn245, Asn290, Asn427, Asn481, and Asn558. The disordered stretch occupies residues 289 to 309 (NNTSATGDDSGGFSHEGGQTS). Positions 593–647 (SKPMRAPSVMSRKGGRGRGIASQRRQQESNLFDSGNTHAESRSPKGGNKGGIDQG) are disordered. Over residues 620 to 630 (ESNLFDSGNTH) the composition is skewed to polar residues. Residues 656–680 (LDNVQKAVTDPGTNAYFVFCLKPND) form an actin-binding region. Helical transmembrane passes span 884 to 904 (WVFT…RWIG) and 923 to 943 (MLIW…PMLI). One can recognise a Cytochrome b5 heme-binding domain in the interval 947-1006 (QNVFSAAELSSHNGKDGNSAYVSIRGHVIDLGSFADRHYPSFVSRKTMLNYAGMDVSSLF). N-linked (GlcNAc...) asparagine glycans are attached at residues Asn1033, Asn1058, and Asn1186. Residues 1196-1216 (LVLAVSILLVSVIAFKFFAAL) traverse the membrane as a helical segment. Residues Asn1453 and Asn1559 are each glycosylated (N-linked (GlcNAc...) asparagine). 4 helical membrane passes run 1568 to 1588 (LIPM…VVFI), 1590 to 1610 (LLST…IVLV), 1617 to 1637 (VPIT…IIFI), and 1644 to 1664 (MVGW…GLPL). A glycan (N-linked (GlcNAc...) asparagine) is linked at Asn1767. Residues 1800-1850 (LPSDDALLAEIRDILKTADLMTVTKKGIKQELERRFDVPLDAKRAYINSGK) enclose the DEK-C domain.

It in the N-terminal section; belongs to the TRAFAC class myosin-kinesin ATPase superfamily. Myosin family. This sequence in the C-terminal section; belongs to the chitin synthase family. Class V subfamily. As to expression, expressed in conidia and during appressorium formation.

Its subcellular location is the cell membrane. The protein localises to the cell septum. It localises to the cell tip. It carries out the reaction [(1-&gt;4)-N-acetyl-beta-D-glucosaminyl](n) + UDP-N-acetyl-alpha-D-glucosamine = [(1-&gt;4)-N-acetyl-beta-D-glucosaminyl](n+1) + UDP + H(+). Functionally, polymerizes chitin, a structural polymer of the cell wall and septum, by transferring the sugar moiety of UDP-GlcNAc to the non-reducing end of the growing chitin polymer. Contributes to the production of conidia and the ability of fungal conidia to germinate. Involved in the fungal cell wall integrity and the ability of conidia to withstand biophysical pressure. Required for appressorium formation and evasion of insect cellular and/or humoral defenses, promoting the fungal dimorphic transition to the production of hyphal bodies that occurs within hosts, and ultimately to virulence. The polypeptide is Chitin synthase V (Metarhizium acridum (strain CQMa 102)).